The following is a 1119-amino-acid chain: uncharacterized protein (1119 aa).

An N-terminal signal peptide occupies residues 1-21 (MNNIYISLYIFFISYIIQLCF). A coiled-coil region spans residues 170-206 (NKKKLDKEKKKNVIELKEYLEDLKKRMFDMQKRLNDI). 2 disordered regions span residues 606 to 627 (NNNTNNTNNNSNNNNNNNIFNN) and 782 to 905 (ASVQ…EHDE). The span at 788–891 (DKGEDNNDND…EKDKSRDDNK (104 aa)) shows a compositional bias: basic and acidic residues. A coiled-coil region spans residues 890 to 920 (NKAQNNNSTDNEEHDEITEQIGFLKNHNQKY).

This is an uncharacterized protein from Plasmodium falciparum (isolate 3D7).